A 248-amino-acid polypeptide reads, in one-letter code: Probable uridine-cytidine kinase (248 aa).

15–23 (GGTSCGKST) lines the ATP pocket. Positions 73, 101, 154, 164, and 172 each coordinate substrate. Aspartate 201 lines the ATP pocket. Positions 224-248 (SDEEEEKENELVKQGSFRRPFSRPH) are disordered.

Belongs to the uridine kinase family.

The catalysed reaction is uridine + ATP = UMP + ADP + H(+). It carries out the reaction cytidine + ATP = CMP + ADP + H(+). It functions in the pathway pyrimidine metabolism; CTP biosynthesis via salvage pathway; CTP from cytidine: step 1/3. Its pathway is pyrimidine metabolism; UMP biosynthesis via salvage pathway; UMP from uridine: step 1/1. This chain is Probable uridine-cytidine kinase, found in Caenorhabditis elegans.